The following is a 248-amino-acid chain: tRNA (guanine-N(7)-)-methyltransferase (248 aa).

Residues Gly-70, 93–94 (EI), 129–130 (NA), and Leu-149 contribute to the S-adenosyl-L-methionine site. Asp-152 is a catalytic residue. Position 227–229 (227–229 (SEE)) interacts with S-adenosyl-L-methionine.

This sequence belongs to the class I-like SAM-binding methyltransferase superfamily. TrmB family.

It localises to the nucleus. It carries out the reaction guanosine(46) in tRNA + S-adenosyl-L-methionine = N(7)-methylguanosine(46) in tRNA + S-adenosyl-L-homocysteine. Its pathway is tRNA modification; N(7)-methylguanine-tRNA biosynthesis. Catalyzes the formation of N(7)-methylguanine at position 46 (m7G46) in tRNA. This is tRNA (guanine-N(7)-)-methyltransferase from Drosophila mojavensis (Fruit fly).